Reading from the N-terminus, the 795-residue chain is Delta-1-pyrroline-5-carboxylate synthase (795 aa).

Residues 1-361 (MLSQVYRYGF…FFSEVKPAGP (361 aa)) are glutamate 5-kinase. Residues Ser117, Asp223, and Asn246 each contribute to the substrate site. ATP-binding positions include 266-267 (SD) and 305-311 (MGGMEAK). N6-succinyllysine occurs at positions 311, 347, and 550. The interval 362–795 (TVEQQGEMAR…NLPIPQRNTN (434 aa)) is gamma-glutamyl phosphate reductase.

It in the N-terminal section; belongs to the glutamate 5-kinase family. In the C-terminal section; belongs to the gamma-glutamyl phosphate reductase family. In terms of assembly, can form homodimers/multimers.

Its subcellular location is the mitochondrion matrix. It catalyses the reaction L-glutamate + ATP = L-glutamyl 5-phosphate + ADP. The catalysed reaction is L-glutamate 5-semialdehyde + phosphate + NADP(+) = L-glutamyl 5-phosphate + NADPH + H(+). Its pathway is amino-acid biosynthesis; L-proline biosynthesis; L-glutamate 5-semialdehyde from L-glutamate: step 1/2. It functions in the pathway amino-acid biosynthesis; L-proline biosynthesis; L-glutamate 5-semialdehyde from L-glutamate: step 2/2. Its function is as follows. Bifunctional enzyme that converts glutamate to glutamate 5-semialdehyde, an intermediate in the biosynthesis of proline, ornithine and arginine. This chain is Delta-1-pyrroline-5-carboxylate synthase (ALDH18A1), found in Pongo abelii (Sumatran orangutan).